The primary structure comprises 125 residues: MFFDTKVLNYPTIHKSISMASTMQRTSSSAASNERQLSQLQRRAPSLMIKPTSFSNWNVAIPLLSPLAPSLTSSFDQSHVPPPQNKTEIPVEEEVKKTPVFKKWQHPASPFCYEPTTFVPPFIQV.

Residues 1 to 46 (MFFDTKVLNYPTIHKSISMASTMQRTSSSAASNERQLSQLQRRAPS) constitute a chloroplast transit peptide.

The protein resides in the plastid. Its subcellular location is the chloroplast. This is an uncharacterized protein from Arabidopsis thaliana (Mouse-ear cress).